Consider the following 82-residue polypeptide: Sec-independent protein translocase protein TatA (82 aa).

A helical membrane pass occupies residues 1–21; it reads MGSFSIWHWLIVLLVVVMIFG. A disordered region spans residues 39-82; sequence FKDGMKDGSTTDAPAASSAPAAQVTGQPANSDKSTIDVEARQKS. The span at 51 to 60 shows a compositional bias: low complexity; sequence APAASSAPAA. A compositionally biased stretch (polar residues) spans 62-71; sequence VTGQPANSDK. Residues 72 to 82 are compositionally biased toward basic and acidic residues; it reads STIDVEARQKS.

Belongs to the TatA/E family. The Tat system comprises two distinct complexes: a TatABC complex, containing multiple copies of TatA, TatB and TatC subunits, and a separate TatA complex, containing only TatA subunits. Substrates initially bind to the TatABC complex, which probably triggers association of the separate TatA complex to form the active translocon.

The protein resides in the cell inner membrane. In terms of biological role, part of the twin-arginine translocation (Tat) system that transports large folded proteins containing a characteristic twin-arginine motif in their signal peptide across membranes. TatA could form the protein-conducting channel of the Tat system. The polypeptide is Sec-independent protein translocase protein TatA (Variovorax paradoxus (strain S110)).